The sequence spans 271 residues: 3-methyl-2-oxobutanoate hydroxymethyltransferase (271 aa).

Positions 52 and 91 each coordinate Mg(2+). Residues 52–53 (DS), D91, and K121 contribute to the 3-methyl-2-oxobutanoate site. E123 serves as a coordination point for Mg(2+). E189 (proton acceptor) is an active-site residue.

This sequence belongs to the PanB family. In terms of assembly, homodecamer; pentamer of dimers. The cofactor is Mg(2+).

It is found in the cytoplasm. The enzyme catalyses 3-methyl-2-oxobutanoate + (6R)-5,10-methylene-5,6,7,8-tetrahydrofolate + H2O = 2-dehydropantoate + (6S)-5,6,7,8-tetrahydrofolate. The protein operates within cofactor biosynthesis; (R)-pantothenate biosynthesis; (R)-pantoate from 3-methyl-2-oxobutanoate: step 1/2. Its function is as follows. Catalyzes the reversible reaction in which hydroxymethyl group from 5,10-methylenetetrahydrofolate is transferred onto alpha-ketoisovalerate to form ketopantoate. The polypeptide is 3-methyl-2-oxobutanoate hydroxymethyltransferase (Acidothermus cellulolyticus (strain ATCC 43068 / DSM 8971 / 11B)).